Reading from the N-terminus, the 542-residue chain is Chaperonin GroEL (542 aa).

ATP is bound by residues 29-32 (TMGP), Lys50, 86-90 (DGTTT), Gly414, 477-479 (NAA), and Asp493.

The protein belongs to the chaperonin (HSP60) family. As to quaternary structure, forms a cylinder of 14 subunits composed of two heptameric rings stacked back-to-back. Interacts with the co-chaperonin GroES.

Its subcellular location is the cytoplasm. It catalyses the reaction ATP + H2O + a folded polypeptide = ADP + phosphate + an unfolded polypeptide.. In terms of biological role, together with its co-chaperonin GroES, plays an essential role in assisting protein folding. The GroEL-GroES system forms a nano-cage that allows encapsulation of the non-native substrate proteins and provides a physical environment optimized to promote and accelerate protein folding. The chain is Chaperonin GroEL from Sulfurimonas denitrificans (strain ATCC 33889 / DSM 1251) (Thiomicrospira denitrificans (strain ATCC 33889 / DSM 1251)).